A 556-amino-acid chain; its full sequence is Copine-7 (556 aa).

C2 domains lie at 1–128 (MSGD…TRPL) and 135–262 (NAGK…AQWD). Ca(2+) contacts are provided by D168, D174, D230, D232, and D238. The VWFA domain occupies 305 to 504 (HCTVAIDFTA…PALRDIVQFV (200 aa)). A disordered region spans residues 536-556 (KDLPPRSLGGQTGEAGPSSAP).

Belongs to the copine family. Ca(2+) is required as a cofactor.

It is found in the cytoplasm. Its subcellular location is the nucleus. It localises to the cell membrane. Functionally, calcium-dependent phospholipid-binding protein that may play a role in calcium-mediated intracellular processes. This is Copine-7 from Rattus norvegicus (Rat).